A 769-amino-acid polypeptide reads, in one-letter code: Serine protease HtrA-like (769 aa).

Over residues 1–20 the composition is skewed to basic residues; sequence MDIGKKHVIPKSQYRRKRRE. Disordered regions lie at residues 1 to 287 and 324 to 390; these read MDIG…DKDN and EDKH…KGRA. Composition is skewed to basic and acidic residues over residues 21-64 and 71-108; these read FFHN…ERFK and LEQR…DVSK. The span at 126–137 shows a compositional bias: polar residues; the sequence is YEQNSEATLSTK. Over residues 138–186 the composition is skewed to basic and acidic residues; that stretch reads STDKVESTEMRKLSSDKNKVGHEEQHVLSKPSEHDKETRIDSESSRTDS. Positions 247-262 are enriched in polar residues; it reads QQSQNEQTKTYTYGDS. The segment covering 264–287 has biased composition (basic and acidic residues); that stretch reads QNDKSNHENDLSHHTPSISDDKDN. Polar residues predominate over residues 331–347; that stretch reads ADSSETVGYQSQSTASH. Over residues 348-364 the composition is skewed to basic and acidic residues; the sequence is RSTEKRNISINDHDKLN. Positions 365 to 390 are enriched in polar residues; sequence GQKTNTKTSANNNQKKATSKLNKGRA. Residues 410–430 traverse the membrane as a helical segment; the sequence is LVILMGIIILIVILNAIFNNV. Catalysis depends on charge relay system residues His-504, Asp-534, and Ser-619. One can recognise a PDZ domain in the interval 680 to 733; sequence IASLNSFERQAVKLPGKVKNGVVVDQVDNNGLADQSGLKKGDVITELDGKLLED.

The protein belongs to the peptidase S1C family.

It localises to the cell membrane. This chain is Serine protease HtrA-like, found in Staphylococcus aureus (strain N315).